Consider the following 119-residue polypeptide: Large ribosomal subunit protein bL20 (119 aa).

Belongs to the bacterial ribosomal protein bL20 family.

Its function is as follows. Binds directly to 23S ribosomal RNA and is necessary for the in vitro assembly process of the 50S ribosomal subunit. It is not involved in the protein synthesizing functions of that subunit. The sequence is that of Large ribosomal subunit protein bL20 from Burkholderia cenocepacia (strain HI2424).